The chain runs to 468 residues: Aspartate ammonia-lyase (468 aa).

Residues threonine 99, serine 138, threonine 139, asparagine 140, and threonine 185 each contribute to the L-aspartate site. The segment at 315 to 324 is SS loop; the sequence is GSSIMPGKVN. The active-site Proton acceptor is the serine 316. 2 residues coordinate L-aspartate: serine 317 and lysine 322.

Belongs to the class-II fumarase/aspartase family. Aspartase subfamily. Homotetramer.

The enzyme catalyses L-aspartate = fumarate + NH4(+). Catalyzes the reversible conversion of L-aspartate to fumarate and ammonia. This chain is Aspartate ammonia-lyase (aspA), found in Helicobacter pylori (strain J99 / ATCC 700824) (Campylobacter pylori J99).